A 71-amino-acid polypeptide reads, in one-letter code: Cytotoxic linear peptide IsCT2 (71 aa).

A signal peptide spans 1 to 23; the sequence is MKTQFAILLVALVLFQMFAQSEA. F36 carries the phenylalanine amide modification. Positions 40-71 are excised as a propeptide; that stretch reads ALNNDLDLDGLDELFDGEISQADVDFLKELMR.

Belongs to the non-disulfide-bridged peptide (NDBP) superfamily. Short antimicrobial peptide (group 4) family. In terms of processing, isCT2F is an enzymatic proteolytic cleavage product of IsCT2 by the proteases present in the venom. In terms of tissue distribution, expressed by the venom gland.

The protein localises to the secreted. Its subcellular location is the target cell membrane. IsCT2 shows weak hemolytic activity and antibacterial activity against both Gram-positive and Gram-negative bacteria probably by forming pores in the cell membrane. IsCT2 adopts an amphipathic alpha-helical structure. Functionally, isCT2f shows neither hemolytic, nor antibacterial activities, surely due to the fact that it cannot apply amphipathic alpha-helical structure. This chain is Cytotoxic linear peptide IsCT2, found in Opisthacanthus madagascariensis (Scorpion).